Here is a 494-residue protein sequence, read N- to C-terminus: Hepatic triacylglycerol lipase (494 aa).

A signal peptide spans 1–21 (MGNHLQISVSLVLCIFIQSSA). The N-linked (GlcNAc...) asparagine glycan is linked to asparagine 79. The active-site Nucleophile is the serine 169. The active-site Charge relay system is aspartate 195. The interval 255–278 (CHFLELYKHIAEHGLNAITQTINC) is essential for determining substrate specificity. Histidine 280 functions as the Charge relay system in the catalytic mechanism. The region spanning 353-487 (YHYQFKIQFI…HPTQEKVFVK (135 aa)) is the PLAT domain. Asparagine 398 carries an N-linked (GlcNAc...) asparagine glycan.

Belongs to the AB hydrolase superfamily. Lipase family. Homodimer.

It is found in the secreted. It catalyses the reaction a triacylglycerol + H2O = a diacylglycerol + a fatty acid + H(+). It carries out the reaction a 1-acyl-sn-glycero-3-phosphocholine + H2O = sn-glycerol 3-phosphocholine + a fatty acid + H(+). The enzyme catalyses a 1,2-diacyl-sn-glycero-3-phosphocholine + H2O = a 2-acyl-sn-glycero-3-phosphocholine + a fatty acid + H(+). The catalysed reaction is 1,2-di-(9Z-octadecenoyl)-sn-glycerol + H2O = 2-(9Z-octadecenoyl)-glycerol + (9Z)-octadecenoate + H(+). It catalyses the reaction 1,2,3-tri-(9Z-octadecenoyl)-glycerol + H2O = 2,3-di-(9Z)-octadecenoyl-sn-glycerol + (9Z)-octadecenoate + H(+). It carries out the reaction 1-(9Z-octadecenoyl)-sn-glycero-3-phospho-L-serine + H2O = sn-glycero-3-phospho-L-serine + (9Z)-octadecenoate + H(+). The enzyme catalyses 1-hexadecanoyl-sn-glycero-3-phosphocholine + H2O = sn-glycerol 3-phosphocholine + hexadecanoate + H(+). The catalysed reaction is 1,3-di-(9Z-octadecenoyl)-glycerol + H2O = 3-(9Z-octadecenoyl)-sn-glycerol + (9Z)-octadecenoate + H(+). It catalyses the reaction 1,2,3-tri-(9Z-octadecenoyl)-glycerol + H2O = di-(9Z)-octadecenoylglycerol + (9Z)-octadecenoate + H(+). It carries out the reaction 1,2-di-(9Z-octadecenoyl)-sn-glycero-3-phosphocholine + H2O = (9Z-octadecenoyl)-sn-glycero-3-phosphocholine + (9Z)-octadecenoate + H(+). The enzyme catalyses 1,2,3-tributanoylglycerol + H2O = dibutanoylglycerol + butanoate + H(+). The catalysed reaction is 1,2-dihexadecanoyl-sn-glycero-3-phosphocholine + H2O = hexadecanoyl-sn-glycero-3-phosphocholine + hexadecanoate + H(+). Phospholipase A1 and lysophospholipase activities are inhibited by annexin II. Catalyzes the hydrolysis of triglycerides and phospholipids present in circulating plasma lipoproteins, including chylomicrons, intermediate density lipoproteins (IDL), low density lipoproteins (LDL) of large size and high density lipoproteins (HDL), releasing free fatty acids (FFA) and smaller lipoprotein particles. Also exhibits lysophospholipase activity. Can hydrolyze both neutral lipid and phospholipid substrates but shows a greater binding affinity for neutral lipid substrates than phospholipid substrates. In native LDL, preferentially hydrolyzes the phosphatidylcholine species containing polyunsaturated fatty acids at sn-2 position. This chain is Hepatic triacylglycerol lipase (Lipc), found in Rattus norvegicus (Rat).